The sequence spans 353 residues: COMPASS component SPP1 (353 aa).

The PHD-type zinc-finger motif lies at 22 to 72; it reads DVYCICKRPDYGELMVGCDGCDDWFHFTCLHIPEQFKDLVFSFYCPYCQAG. Residues Cys-25, Cys-27, Cys-39, Cys-42, His-47, Cys-50, Cys-66, and Cys-69 each contribute to the Zn(2+) site. Residues 83–124 form a non coventional C3H-type zinc finger region; the sequence is NGEGSLPKTLWKRKCRISDCYKPCLQDSKYCSEEHGREFVND. At Ser-87 the chain carries Phosphoserine. Residues Cys-97, Cys-102, Cys-113, and His-117 each contribute to the Zn(2+) site. The span at 235-244 shows a compositional bias: basic and acidic residues; the sequence is VECGKEDSKG. Positions 235-255 are disordered; it reads VECGKEDSKGTKRKKKKNSSR. Residues 245–255 show a composition bias toward basic residues; that stretch reads TKRKKKKNSSR.

In terms of assembly, component of the Set1C/COMPASS complex which consists of SET1(2), BRE2(2), SPP1(2), SDC1(1), SHG1(1), SWD1(1), SWD2(1), and SWD3(1).

The protein resides in the nucleus. Functionally, component of the Set1C/COMPASS complex that specifically mono-, di- and trimethylates histone H3 to form H3K4me1/2/3, which subsequently plays a role in telomere length maintenance and transcription elongation regulation. COMPASS recognizes ubiquitinated H2B on one face of the nucleosome which stimulates the methylation of H3 on the opposing face. SPP1/CPS40 can recognize methylated histone lysine residue H3K4me3 or unmethylated H3K4. Stimulates the RNA binding activity of SET1. This is COMPASS component SPP1 from Saccharomyces cerevisiae (strain ATCC 204508 / S288c) (Baker's yeast).